Here is a 90-residue protein sequence, read N- to C-terminus: Putative membrane protein insertion efficiency factor (90 aa).

This sequence belongs to the UPF0161 family.

Its subcellular location is the cell membrane. In terms of biological role, could be involved in insertion of integral membrane proteins into the membrane. The protein is Putative membrane protein insertion efficiency factor of Lactococcus lactis subsp. cremoris (strain MG1363).